Here is a 142-residue protein sequence, read N- to C-terminus: Large ribosomal subunit protein uL13 (142 aa).

This sequence belongs to the universal ribosomal protein uL13 family. As to quaternary structure, part of the 50S ribosomal subunit.

Its function is as follows. This protein is one of the early assembly proteins of the 50S ribosomal subunit, although it is not seen to bind rRNA by itself. It is important during the early stages of 50S assembly. In Xanthomonas oryzae pv. oryzae (strain MAFF 311018), this protein is Large ribosomal subunit protein uL13.